A 259-amino-acid chain; its full sequence is Putative carbamate hydrolase RutD (259 aa).

Belongs to the AB hydrolase superfamily. Hydrolase RutD family.

It catalyses the reaction carbamate + 2 H(+) = NH4(+) + CO2. Functionally, involved in pyrimidine catabolism. May facilitate the hydrolysis of carbamate, a reaction that can also occur spontaneously. The protein is Putative carbamate hydrolase RutD of Pseudomonas savastanoi pv. phaseolicola (strain 1448A / Race 6) (Pseudomonas syringae pv. phaseolicola (strain 1448A / Race 6)).